The following is a 442-amino-acid chain: Protoheme IX farnesyltransferase (442 aa).

Residues 1-167 are unknown; the sequence is MGVYSLLVLG…AYVQLMKPRL (167 aa). A run of 11 helical transmembrane segments spans residues 49–69, 76–96, 106–126, 167–187, 194–214, 245–265, 267–287, 308–328, 365–385, 386–406, and 421–441; these read AAAL…RTGA, AVTL…YTAM, VHLT…AWTL, LMWL…SQLG, AATV…SGTF, LAFG…VNLL, AVLG…VLKP, WVAV…VIFL, HIVY…ELTG, LGPL…YFAI, and FHAS…DTMV. Residues 168-439 form a prenyltransferase region; the sequence is MWLLCLVAGA…CLLVAVVLDT (272 aa).

It in the C-terminal section; belongs to the UbiA prenyltransferase family. Protoheme IX farnesyltransferase subfamily.

The protein localises to the cell membrane. The enzyme catalyses heme b + (2E,6E)-farnesyl diphosphate + H2O = Fe(II)-heme o + diphosphate. Its pathway is porphyrin-containing compound metabolism; heme O biosynthesis; heme O from protoheme: step 1/1. Functionally, converts heme B (protoheme IX) to heme O by substitution of the vinyl group on carbon 2 of heme B porphyrin ring with a hydroxyethyl farnesyl side group. The chain is Protoheme IX farnesyltransferase (ctaB) from Halobacterium salinarum (strain ATCC 700922 / JCM 11081 / NRC-1) (Halobacterium halobium).